The chain runs to 78 residues: MSDIAERVKKIVIDHLGVDADKVVEGASFIDDLGADSLDTVELVMAFEEEFGVEIPDDAADSILTVGDAVKFIEKAQA.

The region spanning S2–Q77 is the Carrier domain. Residue S37 is modified to O-(pantetheine 4'-phosphoryl)serine.

This sequence belongs to the acyl carrier protein (ACP) family. Post-translationally, 4'-phosphopantetheine is transferred from CoA to a specific serine of apo-ACP by AcpS. This modification is essential for activity because fatty acids are bound in thioester linkage to the sulfhydryl of the prosthetic group.

Its subcellular location is the cytoplasm. It participates in lipid metabolism; fatty acid biosynthesis. In terms of biological role, carrier of the growing fatty acid chain in fatty acid biosynthesis. This chain is Acyl carrier protein AcpP, found in Agrobacterium fabrum (strain C58 / ATCC 33970) (Agrobacterium tumefaciens (strain C58)).